The primary structure comprises 354 residues: Methionine import ATP-binding protein MetN (354 aa).

Residues 8–250 (LDHIDITFHQ…PREDLTKDFI (243 aa)) enclose the ABC transporter domain. 42–49 (GYSGAGKS) lines the ATP pocket.

The protein belongs to the ABC transporter superfamily. Methionine importer (TC 3.A.1.24) family. In terms of assembly, the complex is composed of two ATP-binding proteins (MetN), two transmembrane proteins (MetI) and a solute-binding protein (MetQ).

Its subcellular location is the cell membrane. It carries out the reaction L-methionine(out) + ATP + H2O = L-methionine(in) + ADP + phosphate + H(+). It catalyses the reaction D-methionine(out) + ATP + H2O = D-methionine(in) + ADP + phosphate + H(+). Functionally, part of the ABC transporter complex MetNIQ involved in methionine import. Responsible for energy coupling to the transport system. This is Methionine import ATP-binding protein MetN from Streptococcus mutans serotype c (strain ATCC 700610 / UA159).